The following is a 198-amino-acid chain: Recombination protein RecR (198 aa).

The C4-type zinc finger occupies Cys-57 to Cys-72. Positions Asn-80–Pro-173 constitute a Toprim domain.

The protein belongs to the RecR family.

May play a role in DNA repair. It seems to be involved in an RecBC-independent recombinational process of DNA repair. It may act with RecF and RecO. This Deinococcus deserti (strain DSM 17065 / CIP 109153 / LMG 22923 / VCD115) protein is Recombination protein RecR.